We begin with the raw amino-acid sequence, 416 residues long: STAM-binding protein-like (416 aa).

A disordered region spans residues 214 to 244; that stretch reads SYGTVQPHPPAVDRSLKPSSYGSNSSGVTSD. The segment covering 230-243 has biased composition (low complexity); it reads KPSSYGSNSSGVTS. Positions 249 to 380 constitute an MPN domain; it reads VKIPRDVCCK…LTDYGMKEIG (132 aa). The Zn(2+) site is built by His-327, His-329, Asp-340, His-342, Cys-382, His-388, and His-390. Residues 327–340 carry the JAMM motif motif; that stretch reads HTHPTQTAFLSSVD.

Belongs to the peptidase M67C family. Zn(2+) is required as a cofactor.

In terms of biological role, zinc metalloprotease that specifically cleaves 'Lys-63'-linked polyubiquitin chains. Does not cleave 'Lys-48'-linked polyubiquitin chains. Functions at the endosome and is able to oppose the ubiquitin-dependent sorting of receptors to lysosomes. The protein is STAM-binding protein-like (stambp) of Xenopus laevis (African clawed frog).